Reading from the N-terminus, the 156-residue chain is ATP synthase subunit b (156 aa).

Residues 7–27 (LIVQMLVFVVFIGLTMKFIWP) traverse the membrane as a helical segment.

Belongs to the ATPase B chain family. As to quaternary structure, F-type ATPases have 2 components, F(1) - the catalytic core - and F(0) - the membrane proton channel. F(1) has five subunits: alpha(3), beta(3), gamma(1), delta(1), epsilon(1). F(0) has three main subunits: a(1), b(2) and c(10-14). The alpha and beta chains form an alternating ring which encloses part of the gamma chain. F(1) is attached to F(0) by a central stalk formed by the gamma and epsilon chains, while a peripheral stalk is formed by the delta and b chains.

The protein resides in the cell inner membrane. F(1)F(0) ATP synthase produces ATP from ADP in the presence of a proton or sodium gradient. F-type ATPases consist of two structural domains, F(1) containing the extramembraneous catalytic core and F(0) containing the membrane proton channel, linked together by a central stalk and a peripheral stalk. During catalysis, ATP synthesis in the catalytic domain of F(1) is coupled via a rotary mechanism of the central stalk subunits to proton translocation. In terms of biological role, component of the F(0) channel, it forms part of the peripheral stalk, linking F(1) to F(0). The chain is ATP synthase subunit b from Coxiella burnetii (strain CbuK_Q154) (Coxiella burnetii (strain Q154)).